A 381-amino-acid polypeptide reads, in one-letter code: Fatty acid elongase 6 (381 aa).

A run of 7 helical transmembrane segments spans residues 10–30 (IAAA…LVYS), 69–89 (LPYL…SLIV), 107–127 (GLVH…GLMI), 153–173 (LIWL…IMLL), 182–202 (FLHV…LLVA), 216–236 (GVHV…SGIV), and 280–300 (LLQI…NFLV). A HxxHH motif motif is present at residues 184–188 (HVYHH). Catalysis depends on His187, which acts as the Nucleophile. Positions 362-381 (RKNGNGNGQKASLQAMAGSR) are disordered.

The protein belongs to the ELO family.

The protein resides in the membrane. It participates in lipid metabolism; polyunsaturated fatty acid biosynthesis. Functionally, involved in the synthesis of fatty acids. Elongates C18 polyunsaturated fatty acids (PUFAs) with a preference for Delta6 PUFAs. In Leishmania major, this protein is Fatty acid elongase 6.